We begin with the raw amino-acid sequence, 106 residues long: Pyrimidine/purine nucleoside phosphorylase (106 aa).

It belongs to the nucleoside phosphorylase PpnP family.

The enzyme catalyses a purine D-ribonucleoside + phosphate = a purine nucleobase + alpha-D-ribose 1-phosphate. It catalyses the reaction adenosine + phosphate = alpha-D-ribose 1-phosphate + adenine. It carries out the reaction cytidine + phosphate = cytosine + alpha-D-ribose 1-phosphate. The catalysed reaction is guanosine + phosphate = alpha-D-ribose 1-phosphate + guanine. The enzyme catalyses inosine + phosphate = alpha-D-ribose 1-phosphate + hypoxanthine. It catalyses the reaction thymidine + phosphate = 2-deoxy-alpha-D-ribose 1-phosphate + thymine. It carries out the reaction uridine + phosphate = alpha-D-ribose 1-phosphate + uracil. The catalysed reaction is xanthosine + phosphate = alpha-D-ribose 1-phosphate + xanthine. Functionally, catalyzes the phosphorolysis of diverse nucleosides, yielding D-ribose 1-phosphate and the respective free bases. Can use uridine, adenosine, guanosine, cytidine, thymidine, inosine and xanthosine as substrates. Also catalyzes the reverse reactions. In Burkholderia cenocepacia (strain ATCC BAA-245 / DSM 16553 / LMG 16656 / NCTC 13227 / J2315 / CF5610) (Burkholderia cepacia (strain J2315)), this protein is Pyrimidine/purine nucleoside phosphorylase.